Consider the following 104-residue polypeptide: Protein E7 (104 aa).

Residues methionine 1–glutamine 49 are E7 terminal domain. The LXCXE motif; interaction with host RB1 and TMEM173/STING signature appears at leucine 31–glutamate 35. The segment at cysteine 64–cysteine 100 is a zinc-finger region. A Nuclear export signal motif is present at residues isoleucine 82–leucine 90.

Belongs to the papillomaviridae E7 protein family. Homodimer. Homooligomer. Interacts with host RB1; this interaction induces dissociation of RB1-E2F1 complex thereby disrupting RB1 activity. Interacts with host EP300; this interaction represses EP300 transcriptional activity. Interacts with protein E2; this interaction inhibits E7 oncogenic activity. Interacts with host TMEM173/STING; this interaction impairs the ability of TMEM173/STING to sense cytosolic DNA and promote the production of type I interferon (IFN-alpha and IFN-beta). Highly phosphorylated.

The protein localises to the host cytoplasm. It is found in the host nucleus. Its function is as follows. Plays a role in viral genome replication by driving entry of quiescent cells into the cell cycle. Stimulation of progression from G1 to S phase allows the virus to efficiently use the cellular DNA replicating machinery to achieve viral genome replication. E7 protein has both transforming and trans-activating activities. Induces the disassembly of the E2F1 transcription factor from RB1, with subsequent transcriptional activation of E2F1-regulated S-phase genes. Interferes with host histone deacetylation mediated by HDAC1 and HDAC2, leading to transcription activation. Also plays a role in the inhibition of both antiviral and antiproliferative functions of host interferon alpha. Interaction with host TMEM173/STING impairs the ability of TMEM173/STING to sense cytosolic DNA and promote the production of type I interferon (IFN-alpha and IFN-beta). In Homo sapiens (Human), this protein is Protein E7.